We begin with the raw amino-acid sequence, 424 residues long: MKLEMICTGEEVLAGQIVDTNAAWFANTLMGKGIECQRRITVGDRLEDLVAVFKERSTEADIIMVNGGLGPTSDDLSTEAMALAMGVPLVESKEWRTKLEAWFTRNNRVMAASNLKQALLPEGAVMIDNPVGTACGFAVKLNRAWLFFTPGVPFEFKRMVKEQFIPFVEKQFALSESVSVKKLLTLGRGESSLADELDVIQLPEGVTLGYRSYMPYIEIKLFARGQSAIDSLPDIEAQVKKVLGNGIVAENITTLDQEIHERLINSGLSLSVAESCTGGMITSGLVAFAGSSSYLHQGLVTYSNEAKVKVLGVNSQTLDDYGAVSIATVEEMAKGARGILGSDYALATSGIAGPEGGTDEKPVGTVAIALATKSGIYSQMVKLPGRSRALVRALSTAVAYDMLRRELLGEAVIVDYSSFSRFCK.

The protein belongs to the CinA family.

In Shewanella sediminis (strain HAW-EB3), this protein is CinA-like protein.